Here is a 390-residue protein sequence, read N- to C-terminus: Magnesium-protoporphyrin IX monomethyl ester [oxidative] cyclase (390 aa).

This sequence belongs to the AcsF family. The cofactor is Fe cation.

The enzyme catalyses Mg-protoporphyrin IX 13-monomethyl ester + 3 NADPH + 3 O2 + 2 H(+) = 3,8-divinyl protochlorophyllide a + 3 NADP(+) + 5 H2O. It participates in porphyrin-containing compound metabolism; chlorophyll biosynthesis (light-independent). Its function is as follows. Catalyzes the formation of the isocyclic ring in chlorophyll biosynthesis. Mediates the cyclase reaction, which results in the formation of divinylprotochlorophyllide (Pchlide) characteristic of all chlorophylls from magnesium-protoporphyrin IX 13-monomethyl ester (MgPMME). This is Magnesium-protoporphyrin IX monomethyl ester [oxidative] cyclase from Prochlorococcus marinus (strain AS9601).